Consider the following 60-residue polypeptide: Large ribosomal subunit protein bL32 (60 aa).

A disordered region spans residues 1 to 44; sequence MAVQQNKKSRSARDMRRSHDALSENALSVEKTTGEVHLRHHVSP. Positions 11 to 22 are enriched in basic and acidic residues; sequence SARDMRRSHDAL.

Belongs to the bacterial ribosomal protein bL32 family.

This chain is Large ribosomal subunit protein bL32, found in Pseudomonas putida (strain W619).